Reading from the N-terminus, the 249-residue chain is Small ribosomal subunit protein uS2 (249 aa).

The protein belongs to the universal ribosomal protein uS2 family.

This is Small ribosomal subunit protein uS2 from Bordetella avium (strain 197N).